The sequence spans 873 residues: Serine/threonine-protein phosphatase 6 regulatory subunit 3 (873 aa).

5 disordered regions span residues 628 to 659 (IAFT…GTKQ), 693 to 715 (AHGT…MPAK), 729 to 755 (LSST…PLSA), 767 to 787 (PGSV…NADK), and 840 to 873 (AEEA…NGPV). Positions 644-655 (DSEESTDSEEED) are enriched in acidic residues. Residues 729–739 (LSSTDSLRSNS) are compositionally biased toward low complexity.

The protein belongs to the SAPS family. Protein phosphatase 6 (PP6) holoenzyme is proposed to be a heterotrimeric complex formed by the catalytic subunit, a SAPS domain-containing subunit (PP6R) and an ankyrin repeat-domain containing regulatory subunit (ARS).

Its function is as follows. Regulatory subunit of protein phosphatase 6 (PP6). May function as a scaffolding PP6 subunit. This is Serine/threonine-protein phosphatase 6 regulatory subunit 3 (PPP6R3) from Gallus gallus (Chicken).